The following is a 290-amino-acid chain: uncharacterized protein (290 aa).

Residues 2–238 (LKTENLSVGY…EIVNELYDLK (237 aa)) form the ABC transporter domain. 34–41 (GPNGAGKS) lines the ATP pocket.

This sequence belongs to the ABC transporter superfamily.

This is an uncharacterized protein from Methanocaldococcus jannaschii (strain ATCC 43067 / DSM 2661 / JAL-1 / JCM 10045 / NBRC 100440) (Methanococcus jannaschii).